We begin with the raw amino-acid sequence, 294 residues long: Decaprenyl-diphosphate synthase subunit 2 (294 aa).

The protein belongs to the FPP/GGPP synthase family. In terms of assembly, heterotetramer of 2 dps1 and 2 dlp1 subunits.

It is found in the mitochondrion. The catalysed reaction is 7 isopentenyl diphosphate + (2E,6E)-farnesyl diphosphate = all-trans-decaprenyl diphosphate + 7 diphosphate. The protein operates within cofactor biosynthesis; ubiquinone biosynthesis. Its function is as follows. Supplies decaprenyl diphosphate, the precursor for the side chain of the isoprenoid quinones ubiquinone-10. The protein is Decaprenyl-diphosphate synthase subunit 2 (dlp1) of Schizosaccharomyces pombe (strain 972 / ATCC 24843) (Fission yeast).